Consider the following 393-residue polypeptide: Argininosuccinate synthase (393 aa).

ATP-binding positions include Ala7–Ser15 and Ala34. Residues Tyr85 and Ser90 each coordinate L-citrulline. Gly115 contacts ATP. L-aspartate-binding residues include Thr117, Asn121, and Asp122. An L-citrulline-binding site is contributed by Asn121. L-citrulline contacts are provided by Arg125, Ser176, Ser185, Glu261, and Tyr273.

The protein belongs to the argininosuccinate synthase family. Type 1 subfamily. Homotetramer.

The protein localises to the cytoplasm. The catalysed reaction is L-citrulline + L-aspartate + ATP = 2-(N(omega)-L-arginino)succinate + AMP + diphosphate + H(+). It participates in amino-acid biosynthesis; L-arginine biosynthesis; L-arginine from L-ornithine and carbamoyl phosphate: step 2/3. This is Argininosuccinate synthase from Ehrlichia canis (strain Jake).